The sequence spans 881 residues: DNA mismatch repair protein MutS (881 aa).

627–634 is an ATP binding site; it reads GPNMGGKS.

Belongs to the DNA mismatch repair MutS family.

In terms of biological role, this protein is involved in the repair of mismatches in DNA. It is possible that it carries out the mismatch recognition step. This protein has a weak ATPase activity. In Acinetobacter baumannii (strain AB307-0294), this protein is DNA mismatch repair protein MutS.